We begin with the raw amino-acid sequence, 564 residues long: Proline--tRNA ligase (564 aa).

Belongs to the class-II aminoacyl-tRNA synthetase family. ProS type 1 subfamily. In terms of assembly, homodimer.

Its subcellular location is the cytoplasm. The enzyme catalyses tRNA(Pro) + L-proline + ATP = L-prolyl-tRNA(Pro) + AMP + diphosphate. In terms of biological role, catalyzes the attachment of proline to tRNA(Pro) in a two-step reaction: proline is first activated by ATP to form Pro-AMP and then transferred to the acceptor end of tRNA(Pro). As ProRS can inadvertently accommodate and process non-cognate amino acids such as alanine and cysteine, to avoid such errors it has two additional distinct editing activities against alanine. One activity is designated as 'pretransfer' editing and involves the tRNA(Pro)-independent hydrolysis of activated Ala-AMP. The other activity is designated 'posttransfer' editing and involves deacylation of mischarged Ala-tRNA(Pro). The misacylated Cys-tRNA(Pro) is not edited by ProRS. This Xylella fastidiosa (strain M12) protein is Proline--tRNA ligase.